The following is a 286-amino-acid chain: 33 kDa chaperonin (286 aa).

2 cysteine pairs are disulfide-bonded: C225–C227 and C258–C261.

This sequence belongs to the HSP33 family. Under oxidizing conditions two disulfide bonds are formed involving the reactive cysteines. Under reducing conditions zinc is bound to the reactive cysteines and the protein is inactive.

It is found in the cytoplasm. Its function is as follows. Redox regulated molecular chaperone. Protects both thermally unfolding and oxidatively damaged proteins from irreversible aggregation. Plays an important role in the bacterial defense system toward oxidative stress. This chain is 33 kDa chaperonin, found in Shewanella frigidimarina (strain NCIMB 400).